Reading from the N-terminus, the 118-residue chain is Large ribosomal subunit protein uL18 (118 aa).

Belongs to the universal ribosomal protein uL18 family. As to quaternary structure, part of the 50S ribosomal subunit; part of the 5S rRNA/L5/L18/L25 subcomplex. Contacts the 5S and 23S rRNAs.

Functionally, this is one of the proteins that bind and probably mediate the attachment of the 5S RNA into the large ribosomal subunit, where it forms part of the central protuberance. The chain is Large ribosomal subunit protein uL18 from Nitrosospira multiformis (strain ATCC 25196 / NCIMB 11849 / C 71).